A 199-amino-acid chain; its full sequence is 7-methyl-GTP pyrophosphatase (199 aa).

The active-site Proton acceptor is the Asp-73.

Belongs to the Maf family. YceF subfamily. A divalent metal cation serves as cofactor.

It is found in the cytoplasm. It catalyses the reaction N(7)-methyl-GTP + H2O = N(7)-methyl-GMP + diphosphate + H(+). Its function is as follows. Nucleoside triphosphate pyrophosphatase that hydrolyzes 7-methyl-GTP (m(7)GTP). May have a dual role in cell division arrest and in preventing the incorporation of modified nucleotides into cellular nucleic acids. In Bordetella pertussis (strain Tohama I / ATCC BAA-589 / NCTC 13251), this protein is 7-methyl-GTP pyrophosphatase.